The chain runs to 73 residues: Probable cytochrome b-c1 complex subunit 8 (73 aa).

Over 1-42 the chain is Mitochondrial matrix; the sequence is MGQASKVFGKQITYSVSPFQQKLFVNYFKNAIPHLRRGVKDN. The chain crosses the membrane as a helical span at residues 43-60; that stretch reads FFCSVPYFAALYITVNWA. Residues 61–73 are Mitochondrial intermembrane-facing; sequence NETYHNEMKDHWY.

It belongs to the UQCRQ/QCR8 family. In terms of assembly, component of the ubiquinol-cytochrome c oxidoreductase (cytochrome b-c1 complex, complex III, CIII), a multisubunit enzyme composed of 3 respiratory subunits cytochrome b, cytochrome c1 and Rieske protein, 2 core protein subunits, and additional low-molecular weight protein subunits. The complex exists as an obligatory dimer and forms supercomplexes (SCs) in the inner mitochondrial membrane with cytochrome c oxidase (complex IV, CIV).

The protein resides in the mitochondrion inner membrane. In terms of biological role, component of the ubiquinol-cytochrome c oxidoreductase, a multisubunit transmembrane complex that is part of the mitochondrial electron transport chain which drives oxidative phosphorylation. The respiratory chain contains 3 multisubunit complexes succinate dehydrogenase (complex II, CII), ubiquinol-cytochrome c oxidoreductase (cytochrome b-c1 complex, complex III, CIII) and cytochrome c oxidase (complex IV, CIV), that cooperate to transfer electrons derived from NADH and succinate to molecular oxygen, creating an electrochemical gradient over the inner membrane that drives transmembrane transport and the ATP synthase. The cytochrome b-c1 complex catalyzes electron transfer from ubiquinol to cytochrome c, linking this redox reaction to translocation of protons across the mitochondrial inner membrane, with protons being carried across the membrane as hydrogens on the quinol. In the process called Q cycle, 2 protons are consumed from the matrix, 4 protons are released into the intermembrane space and 2 electrons are passed to cytochrome c. The chain is Probable cytochrome b-c1 complex subunit 8 from Dictyostelium discoideum (Social amoeba).